Consider the following 233-residue polypeptide: MHTVIRQMSQLRLQAMPSSALLKATASASAPSALDHSGAAVNHHSLHTAAGSGGALCASWNKHNNGPRKWLVYNKTVHPPQQPDEEPRKAYVCHMRSNIKYSPDKMWYIAAFVRGMSVDEALKQLNFVLKKGATDVKETILEAQEMAVQRHNVEYKSNLWVAESFVGKGRVFKGMRRHARGRFGQVEYKHCHYFVRLEEGQPPEHYYQEPQTPEQQYEHWLEQMRSRKVINSL.

It belongs to the universal ribosomal protein uL22 family. Component of the mitochondrial ribosome large subunit (39S) which comprises a 16S rRNA and about 50 distinct proteins.

Its subcellular location is the mitochondrion. The sequence is that of Large ribosomal subunit protein uL22m (mRpL22) from Drosophila pseudoobscura pseudoobscura (Fruit fly).